The primary structure comprises 396 residues: Phosphoglycerate kinase (396 aa).

Substrate contacts are provided by residues 21–23 (DFN), arginine 36, 59–62 (HFDR), arginine 118, and arginine 151. Residues lysine 201, glutamate 323, and 353 to 356 (GGDT) contribute to the ATP site.

This sequence belongs to the phosphoglycerate kinase family. Monomer.

The protein localises to the cytoplasm. It carries out the reaction (2R)-3-phosphoglycerate + ATP = (2R)-3-phospho-glyceroyl phosphate + ADP. Its pathway is carbohydrate degradation; glycolysis; pyruvate from D-glyceraldehyde 3-phosphate: step 2/5. The chain is Phosphoglycerate kinase from Caulobacter vibrioides (strain ATCC 19089 / CIP 103742 / CB 15) (Caulobacter crescentus).